Consider the following 146-residue polypeptide: UPF0178 protein R01393 (146 aa).

The protein belongs to the UPF0178 family.

The protein is UPF0178 protein R01393 of Rhizobium meliloti (strain 1021) (Ensifer meliloti).